The sequence spans 210 residues: Somatotropin-2 (210 aa).

A signal peptide spans 1–22 (MGQVFLLMPVLLVSCFLSQGAA). Residue H38 coordinates Zn(2+). A disulfide bridge links C71 with C183. E192 provides a ligand contact to Zn(2+). C200 and C208 are oxidised to a cystine.

Belongs to the somatotropin/prolactin family.

It is found in the secreted. Its function is as follows. Growth hormone plays an important role in growth control and is involved in the regulation of several anabolic processes. Implicated as an osmoregulatory substance important for seawater adaptation. The polypeptide is Somatotropin-2 (gh2) (Oncorhynchus nerka (Sockeye salmon)).